We begin with the raw amino-acid sequence, 348 residues long: Actin maturation protease (348 aa).

A compositionally biased stretch (pro residues) spans 1–18 (MISPCSPPLEPPVPPPET). The tract at residues 1 to 64 (MISPCSPPLE…LPPPPRTTGF (64 aa)) is disordered. The span at 34-48 (NLPELAFPPSSFQAS) shows a compositional bias: low complexity. Over residues 49-60 (VPPPPPLPPPPR) the composition is skewed to pro residues. A peptidase C39-like region spans residues 121–241 (SLIQEGPQCG…WAVSAGVLLG (121 aa)). Residue Cys-129 is part of the active site. Ser-313 is modified (phosphoserine).

The protein belongs to the ACTMAP family. In terms of assembly, interacts (via N-terminus) with PFN2; the interaction may facilitate efficient cleavage of the acetylated N-terminus of immature actin. Interacts with PFN1.

It localises to the cytoplasm. It catalyses the reaction N-terminal N(alpha)-acetyl-L-methionyl-L-aspartyl-[protein] + H2O = N-terminal L-aspartyl-[protein] + N-acetyl-L-methionine. The enzyme catalyses N-terminal N(alpha)-acetyl-L-methionyl-L-glutamyl-[protein] + H2O = N-terminal L-glutamyl-[protein] + N-acetyl-L-methionine. It carries out the reaction N-terminal N(alpha)-acetyl-L-cysteinyl-L-aspartyl-[protein] + H2O = N-terminal L-aspartyl-[protein] + N-acetyl-L-cysteine. The catalysed reaction is N-terminal N(alpha)-acetyl-L-cysteinyl-L-glutamyl-[protein] + H2O = N-terminal L-glutamyl-[protein] + N-acetyl-L-cysteine. Its function is as follows. Actin maturation protease that specifically mediates the cleavage of immature acetylated N-terminal actin, thereby contributing to actin maturation. Cleaves N-terminal acetylated methionine of immature cytoplasmic beta- and gamma-actins ACTB and ACTG1 after translation. Cleaves N-terminal acetylated cysteine of muscle alpha-actins ACTA1, ACTC1 and ACTA2 after canonical removal of N-terminal methionine. This is Actin maturation protease from Bos taurus (Bovine).